A 188-amino-acid polypeptide reads, in one-letter code: MENELKLYYAVSSQNENLVIQLLNKGYNPNAINRFKYMIPLHKAVECRNVDITKHLLSNGADANVRDFLGLGVFHILSMFSSLPELKDILHNTEGTFVLCKYNYAPLEEDYEVKTLEIARMLFISKANINMTSKLGSTPLHIASKYNNKTMVKFFLERGADINILDSNNNTPLIYAVCSVIRLYLKCY.

4 ANK repeats span residues 2 to 31 (ENEL…NPNA), 36 to 65 (KYMI…DANV), 135 to 164 (LGST…DINI), and 168 to 187 (NNNT…YLKC).

The chain is Putative ankyrin repeat protein FPV230 from Vertebrata (FPV).